A 318-amino-acid polypeptide reads, in one-letter code: MFMINILMLIIPILLAVAFLTLVERKVLGYMQLRKGPNVVGPYGLLQPIADAIKLFIKEPLRPATSSASMFILAPIMALGLALTMWIPLPMPYPLINMNLGVLFMLAMSSLAVYSILWSGWASNSKYALIGALRAVAQTISYEVTLAIILLSVLLMSGSFTLSTLIITQEQMWLILPAWPLAMMWFISTLAETNRAPFDLTEGESELVSGFNVEYAAGPFALFFMAEYANIIMMNIFTAILFLGTSHNPHMPELYTINFTIKSLLLTMSFLWIRASYPRFRYDQLMHLLWKNFLPLTLALCMWHVSLPILTSGIPPQT.

Transmembrane regions (helical) follow at residues 2-22, 70-90, 100-120, 147-167, 172-192, 222-242, 253-273, and 294-314; these read FMIN…FLTL, MFIL…IPLP, LGVL…LWSG, AIIL…TLII, MWLI…TLAE, LFFM…AILF, ELYT…FLWI, and LPLT…TSGI.

This sequence belongs to the complex I subunit 1 family. In terms of assembly, core subunit of respiratory chain NADH dehydrogenase (Complex I) which is composed of 45 different subunits.

It is found in the mitochondrion inner membrane. It carries out the reaction a ubiquinone + NADH + 5 H(+)(in) = a ubiquinol + NAD(+) + 4 H(+)(out). Its function is as follows. Core subunit of the mitochondrial membrane respiratory chain NADH dehydrogenase (Complex I) which catalyzes electron transfer from NADH through the respiratory chain, using ubiquinone as an electron acceptor. Essential for the catalytic activity and assembly of complex I. The chain is NADH-ubiquinone oxidoreductase chain 1 (MT-ND1) from Bos indicus (Zebu).